A 33-amino-acid chain; its full sequence is Alpha-amanitin proprotein (33 aa).

A propeptide spanning residues 1-10 is cleaved from the precursor; it reads MSDINATRLP. Residue I11 is modified to (3R,4R)-4,5-dihydroxyisoleucine; in form alpha-amanitin. I11 carries the post-translational modification (3R,4S)-4-hydroxyisoleucine; in form gamma-amanitin. Residues 11–18 constitute a cross-link (cyclopeptide (Ile-Pro)); that stretch reads IWGIGCNP. Positions 12–16 form a cross-link, 2'-cysteinyl-6'-hydroxytryptophan sulfoxide (Trp-Cys); the sequence is WGIGC. P18 carries the post-translational modification 4-hydroxyproline. The propeptide occupies 19–33; it reads CVGDEVTALLTRGEA.

This sequence belongs to the MSDIN fungal toxin family. Post-translationally, processed by the macrocyclase-peptidase enzyme POPB to yield a toxic cyclic decapeptide. POPB first removes 10 residues from the N-terminus. Conformational trapping of the remaining peptide forces the enzyme to release this intermediate rather than proceed to macrocyclization. The enzyme rebinds the remaining peptide in a different conformation and catalyzes macrocyclization of the N-terminal 8 residues.

Its function is as follows. Major toxin belonging to the bicyclic octapeptides amatoxins that acts by binding non-competitively to RNA polymerase II and greatly slowing the elongation of transcripts from target promoters. This chain is Alpha-amanitin proprotein, found in Amanita fuligineoides.